The following is a 306-amino-acid chain: tRNA N6-adenosine threonylcarbamoyltransferase (306 aa).

Fe cation-binding residues include His-110 and His-114. Substrate contacts are provided by residues 132 to 136 (IASGK), Asp-165, Gly-178, Asp-182, and Asn-268. Fe cation is bound at residue Asp-292.

It belongs to the KAE1 / TsaD family. Fe(2+) is required as a cofactor.

It localises to the cytoplasm. The enzyme catalyses L-threonylcarbamoyladenylate + adenosine(37) in tRNA = N(6)-L-threonylcarbamoyladenosine(37) in tRNA + AMP + H(+). In terms of biological role, required for the formation of a threonylcarbamoyl group on adenosine at position 37 (t(6)A37) in tRNAs that read codons beginning with adenine. Is involved in the transfer of the threonylcarbamoyl moiety of threonylcarbamoyl-AMP (TC-AMP) to the N6 group of A37, together with TsaE and TsaB. TsaD likely plays a direct catalytic role in this reaction. This is tRNA N6-adenosine threonylcarbamoyltransferase from Malacoplasma penetrans (strain HF-2) (Mycoplasma penetrans).